Reading from the N-terminus, the 600-residue chain is NAD-dependent malic enzyme, mitochondrial (600 aa).

The N-terminal 68 residues, 1–68 (MTRTPFTLSL…NMPIAAPVRT (68 aa)), are a transit peptide targeting the mitochondrion. Position 93 (arginine 93) interacts with fumarate. The active-site Proton donor is the tyrosine 138. Residue arginine 194 coordinates (S)-malate. Arginine 194 contributes to the NAD(+) binding site. Lysine 212 serves as the catalytic Proton acceptor. The a divalent metal cation site is built by glutamate 283, aspartate 284, and aspartate 307. NAD(+)-binding residues include glycine 344 and alanine 347. Residues asparagine 458 and asparagine 502 each contribute to the (S)-malate site.

Belongs to the malic enzymes family. Mg(2+) serves as cofactor. Mn(2+) is required as a cofactor.

Its subcellular location is the mitochondrion matrix. It is found in the cytoplasm. It localises to the cytosol. The protein resides in the nucleus. It catalyses the reaction (S)-malate + NAD(+) = pyruvate + CO2 + NADH. It carries out the reaction oxaloacetate + H(+) = pyruvate + CO2. NAD-dependent mitochondrial malic enzyme that catalyzes the oxidative decarboxylation of malate to pyruvate. The sequence is that of NAD-dependent malic enzyme, mitochondrial from Cryptococcus neoformans var. grubii serotype A (strain H99 / ATCC 208821 / CBS 10515 / FGSC 9487) (Filobasidiella neoformans var. grubii).